The following is a 195-amino-acid chain: ATP-dependent Clp protease proteolytic subunit (195 aa).

Catalysis depends on Ser98, which acts as the Nucleophile. The active site involves His123.

Belongs to the peptidase S14 family. Fourteen ClpP subunits assemble into 2 heptameric rings which stack back to back to give a disk-like structure with a central cavity, resembling the structure of eukaryotic proteasomes.

It localises to the cytoplasm. It catalyses the reaction Hydrolysis of proteins to small peptides in the presence of ATP and magnesium. alpha-casein is the usual test substrate. In the absence of ATP, only oligopeptides shorter than five residues are hydrolyzed (such as succinyl-Leu-Tyr-|-NHMec, and Leu-Tyr-Leu-|-Tyr-Trp, in which cleavage of the -Tyr-|-Leu- and -Tyr-|-Trp bonds also occurs).. Cleaves peptides in various proteins in a process that requires ATP hydrolysis. Has a chymotrypsin-like activity. Plays a major role in the degradation of misfolded proteins. The polypeptide is ATP-dependent Clp protease proteolytic subunit (Thermodesulfovibrio yellowstonii (strain ATCC 51303 / DSM 11347 / YP87)).